Reading from the N-terminus, the 663-residue chain is Transmembrane 9 superfamily member 2 (663 aa).

An N-terminal signal peptide occupies residues 1 to 28 (MSARLPVLSPPRWPRLLLLSLLLLGAVP). Residues 29 to 300 (GPRRSGAFYL…LESMPHTHIQ (272 aa)) are Lumenal-facing. The helical transmembrane segment at 301 to 321 (WFSIMNSLVIVLFLSGMVAMI) threads the bilayer. Residues 322–374 (MLRTLHKDIARYNQMDSTEDAQEEFGWKLVHGDIFRPPRKGMLLSVFLGSGTQ) lie on the Cytoplasmic side of the membrane. Residues 375–395 (ILIMTFVTLFFACLGFLSPAN) form a helical membrane-spanning segment. Residues 396–398 (RGA) are Lumenal-facing. The helical transmembrane segment at 399-419 (LMTCAVVLWVLLGTPAGYVAA) threads the bilayer. At 420–437 (RFYKSFGGEKWKTNVLLT) the chain is on the cytoplasmic side. Residues 438–458 (SFLCPGIVFADFFIMNLILWG) form a helical membrane-spanning segment. Topologically, residues 459–466 (EGSSAAIP) are lumenal. A helical membrane pass occupies residues 467-487 (FGTLVAILALWFCISVPLTFI). The Cytoplasmic segment spans residues 488 to 522 (GAYFGFKKNAIEHPVRTNQIPRQIPEQSFYTKPLP). A helical transmembrane segment spans residues 523 to 543 (GIIMGGILPFGCIFIQLFFIL). Residues 544–554 (NSIWSHQMYYM) are Lumenal-facing. Residues 555 to 575 (FGFLFLVFIILVITCSEATIL) form a helical membrane-spanning segment. Over 576 to 591 (LCYFHLCAEDYHWQWR) the chain is Cytoplasmic. The helical transmembrane segment at 592-612 (SFLTSGFTAVYFLIYAVHYFF) threads the bilayer. The Lumenal portion of the chain corresponds to 613-631 (SKLQITGTASTILYFGYTM). A helical transmembrane segment spans residues 632-652 (IMVLIFFLFTGTIGFFACFWF). The Cytoplasmic portion of the chain corresponds to 653–663 (VTKIYSVVKVD).

This sequence belongs to the nonaspanin (TM9SF) (TC 9.A.2) family. As to expression, ubiquitously expressed. Especially abundant in pancreas, highly expressed in kidney, lower levels in heart, brain, skeletal muscle and placenta. Lowest expression in lung and liver.

The protein localises to the endosome membrane. It localises to the golgi outpost. The protein resides in the cytoplasm. Its subcellular location is the cytoskeleton. It is found in the microtubule organizing center. Its function is as follows. In the intracellular compartments, may function as a channel or small molecule transporter. The chain is Transmembrane 9 superfamily member 2 (TM9SF2) from Homo sapiens (Human).